We begin with the raw amino-acid sequence, 314 residues long: Mycothiol acetyltransferase (314 aa).

N-acetyltransferase domains follow at residues 18 to 156 and 168 to 314; these read ATIR…RPLA and IRIA…MYQL. Glu38 is a binding site for 1D-myo-inositol 2-(L-cysteinylamino)-2-deoxy-alpha-D-glucopyranoside. 92–94 is a binding site for acetyl-CoA; sequence VVV. Positions 195, 234, and 248 each coordinate 1D-myo-inositol 2-(L-cysteinylamino)-2-deoxy-alpha-D-glucopyranoside. Acetyl-CoA-binding positions include 252-254 and 259-265; these read VGL and QGHGLGR. Tyr286 is a binding site for 1D-myo-inositol 2-(L-cysteinylamino)-2-deoxy-alpha-D-glucopyranoside.

It belongs to the acetyltransferase family. MshD subfamily. In terms of assembly, monomer.

The catalysed reaction is 1D-myo-inositol 2-(L-cysteinylamino)-2-deoxy-alpha-D-glucopyranoside + acetyl-CoA = mycothiol + CoA + H(+). Catalyzes the transfer of acetyl from acetyl-CoA to desacetylmycothiol (Cys-GlcN-Ins) to form mycothiol. The chain is Mycothiol acetyltransferase from Catenulispora acidiphila (strain DSM 44928 / JCM 14897 / NBRC 102108 / NRRL B-24433 / ID139908).